Here is a 244-residue protein sequence, read N- to C-terminus: Vesicle-associated membrane protein-associated protein SCS2 (244 aa).

Serine 2 carries the N-acetylserine modification. The Cytoplasmic portion of the chain corresponds to 2 to 222 (SAVEISPDVL…EAATVPAENE (221 aa)). The 124-residue stretch at 3 to 126 (AVEISPDVLV…ISKKIKVKYL (124 aa)) folds into the MSP domain. A Phosphoserine modification is found at serine 106. The tract at residues 135–219 (QNQNIQENKE…QIKEAATVPA (85 aa)) is disordered. A compositionally biased stretch (basic and acidic residues) spans 153-168 (SEPKEVPAVVNEKEVP). Polar residues predominate over residues 199 to 211 (QTSNSTPAPQNQI). The helical; Anchor for type IV membrane protein transmembrane segment at 223-243 (SSSMGIFILVALLILVLGWFY) threads the bilayer. Position 244 (arginine 244) is a topological domain, lumenal.

Belongs to the VAMP-associated protein (VAP) (TC 9.B.17) family. In terms of assembly, interacts with OPI1. Also interacts with PBI1. Interacts with EPO1.

Its subcellular location is the endoplasmic reticulum membrane. The protein resides in the nucleus membrane. In terms of biological role, acts as an endoplasmic reticulum (ER) membrane anchor for cytoplasmic proteins via binding to the FFAT motif of targeted proteins. Regulates phospholipid biosynthesis by modulating the subcellular localization of the transcriptional repressor OPI1. Also contributes to the tethering of the ER to the plasma membrane. Allows interorganelle phosphatidylserine (PtdSer) transport via a process that involves the acceptor membrane complex PDR17-PDS2 that binds to PBI1 which in turn ligates to SCS2 and phosphatidic acid present in the donor membrane, forming a zone of apposition that facilitates PtdSer transfer. This chain is Vesicle-associated membrane protein-associated protein SCS2, found in Saccharomyces cerevisiae (strain ATCC 204508 / S288c) (Baker's yeast).